The sequence spans 345 residues: L-threonine 3-dehydrogenase (345 aa).

Residue Cys-42 participates in Zn(2+) binding. Catalysis depends on charge relay system residues Thr-44 and His-47. Zn(2+) contacts are provided by His-67, Glu-68, Cys-97, Cys-100, Cys-103, and Cys-111. NAD(+)-binding positions include Ile-179, Asp-199, Arg-204, 266–268 (LGI), and 290–291 (IY).

Belongs to the zinc-containing alcohol dehydrogenase family. As to quaternary structure, homotetramer. Zn(2+) serves as cofactor.

It is found in the cytoplasm. The catalysed reaction is L-threonine + NAD(+) = (2S)-2-amino-3-oxobutanoate + NADH + H(+). It participates in amino-acid degradation; L-threonine degradation via oxydo-reductase pathway; glycine from L-threonine: step 1/2. Its function is as follows. Catalyzes the NAD(+)-dependent oxidation of L-threonine to 2-amino-3-ketobutyrate. The polypeptide is L-threonine 3-dehydrogenase (Sinorhizobium fredii (strain NBRC 101917 / NGR234)).